The primary structure comprises 252 residues: uncharacterized protein (252 aa).

An ABC transporter domain is found at Ile-13 to Leu-247. Residue Gly-45–Ser-52 participates in ATP binding.

This sequence belongs to the ABC transporter superfamily.

The protein resides in the cell inner membrane. Functionally, probably part of a binding-protein-dependent transport system YdhWXYZ for an amino acid. Probably responsible for energy coupling to the transport system. This is an uncharacterized protein from Escherichia coli (strain K12).